The primary structure comprises 268 residues: Dioscorin DB3S (268 aa).

The 235-residue stretch at 25-259 (DEFSYIEGNP…TNFRSVFYFE (235 aa)) folds into the Alpha-carbonic anhydrase domain. The cysteines at positions 50 and 209 are disulfide-linked. His91 acts as the Proton acceptor in catalysis. Residues Asp92, 117-119 (HFH), Gln136, and 205-206 (TA) contribute to the L-ascorbate site.

Belongs to the alpha-class carbonic anhydrase family. Monomer. Homodimer. In terms of processing, not glycosylated. As to expression, expressed in tuber (at protein level).

The enzyme catalyses hydrogencarbonate + H(+) = CO2 + H2O. It catalyses the reaction 2 monodehydro-L-ascorbate radical + NADH + H(+) = 2 L-ascorbate + NAD(+). Storage protein of tuber. Involved in protection against oxidative stress. Has carbonate dehydratase and weak trypsin inhibitor activity detected by measuring the dehydration of sodium bicarbonate and the inhibition of trypsin-catalyzed hydrolysis of N-benzoyl-L-arginine-4-nitro anilide, respectively. Contrarily, no carbonate dehydratase or trypsin inhibitor activity detected by measuring the hydrolysis of 4-nitrophenyl acetate or the inhibition of bovine trypsin-catalyzed hydrolysis of N-benzoyl-L-arginine ethyl ester, respectively. Has dehydroascorbate (DHA) reductase and monodehydroascorbate (MDA) reductase activities. Catalyzes the reactions of carbonate dehydratase and DHA reductase independently of zinc and glutathione (GSH). The coupled reaction is capable of recycling a plant antioxidant ascorbate using ubiquitous compounds H(2)O and CO(2). Exhibits antioxidant activity. Able to scavenge 1,1-diphenyl-2-picrylhydrazyl (DPPH) radical and hydroxyl radicals. Exhibits immunomodulatory activity. Activates Toll-like receptor 4 signaling pathways by up-regulating the gene expression of pro-inflammatory cytokines, such as tumor necrosis factor alpha, interleukin-1 beta and interleukin-6, and chemokines RANTES and MCP-1, in mouse RAW 264.7 macrophages. Stimulates the phagocytosis of E.coli by the LPS-treated mouse macrophages. The chain is Dioscorin DB3S from Dioscorea polystachya (Chinese yam).